The chain runs to 398 residues: 4-hydroxy-3-methylbut-2-enyl diphosphate reductase (398 aa).

Position 66 (C66) interacts with [4Fe-4S] cluster. H96 serves as a coordination point for (2E)-4-hydroxy-3-methylbut-2-enyl diphosphate. H96 is a dimethylallyl diphosphate binding site. H96 is a binding site for isopentenyl diphosphate. [4Fe-4S] cluster is bound at residue C157. Residue H185 coordinates (2E)-4-hydroxy-3-methylbut-2-enyl diphosphate. Residue H185 coordinates dimethylallyl diphosphate. Residue H185 participates in isopentenyl diphosphate binding. The Proton donor role is filled by E187. Residue T250 participates in (2E)-4-hydroxy-3-methylbut-2-enyl diphosphate binding. C288 lines the [4Fe-4S] cluster pocket. (2E)-4-hydroxy-3-methylbut-2-enyl diphosphate is bound by residues S317, S318, N319, and S379. S317, S318, N319, and S379 together coordinate dimethylallyl diphosphate. Positions 317, 318, 319, and 379 each coordinate isopentenyl diphosphate.

It belongs to the IspH family. Requires [4Fe-4S] cluster as cofactor.

It carries out the reaction isopentenyl diphosphate + 2 oxidized [2Fe-2S]-[ferredoxin] + H2O = (2E)-4-hydroxy-3-methylbut-2-enyl diphosphate + 2 reduced [2Fe-2S]-[ferredoxin] + 2 H(+). The enzyme catalyses dimethylallyl diphosphate + 2 oxidized [2Fe-2S]-[ferredoxin] + H2O = (2E)-4-hydroxy-3-methylbut-2-enyl diphosphate + 2 reduced [2Fe-2S]-[ferredoxin] + 2 H(+). The protein operates within isoprenoid biosynthesis; dimethylallyl diphosphate biosynthesis; dimethylallyl diphosphate from (2E)-4-hydroxy-3-methylbutenyl diphosphate: step 1/1. Its pathway is isoprenoid biosynthesis; isopentenyl diphosphate biosynthesis via DXP pathway; isopentenyl diphosphate from 1-deoxy-D-xylulose 5-phosphate: step 6/6. Catalyzes the conversion of 1-hydroxy-2-methyl-2-(E)-butenyl 4-diphosphate (HMBPP) into a mixture of isopentenyl diphosphate (IPP) and dimethylallyl diphosphate (DMAPP). Acts in the terminal step of the DOXP/MEP pathway for isoprenoid precursor biosynthesis. The chain is 4-hydroxy-3-methylbut-2-enyl diphosphate reductase from Synechococcus sp. (strain CC9311).